Reading from the N-terminus, the 284-residue chain is 2,3,4,5-tetrahydropyridine-2,6-dicarboxylate N-succinyltransferase (284 aa).

Substrate contacts are provided by arginine 111 and aspartate 148.

It belongs to the transferase hexapeptide repeat family. As to quaternary structure, homotrimer.

It localises to the cytoplasm. The catalysed reaction is (S)-2,3,4,5-tetrahydrodipicolinate + succinyl-CoA + H2O = (S)-2-succinylamino-6-oxoheptanedioate + CoA. Its pathway is amino-acid biosynthesis; L-lysine biosynthesis via DAP pathway; LL-2,6-diaminopimelate from (S)-tetrahydrodipicolinate (succinylase route): step 1/3. The chain is 2,3,4,5-tetrahydropyridine-2,6-dicarboxylate N-succinyltransferase from Chelativorans sp. (strain BNC1).